A 298-amino-acid polypeptide reads, in one-letter code: Tyrosine recombinase XerC (298 aa).

Positions 1 to 84 (MNHIQEAFLN…TLRTFYEYWM (84 aa)) constitute a Core-binding (CB) domain. Residues 105–286 (YLPQFFYEEE…SNQQLRKVYL (182 aa)) enclose the Tyr recombinase domain. Active-site residues include Arg145, Lys169, His238, Arg241, and His264. Residue Tyr273 is the O-(3'-phospho-DNA)-tyrosine intermediate of the active site.

The protein belongs to the 'phage' integrase family. XerC subfamily. Forms a cyclic heterotetrameric complex composed of two molecules of XerC and two molecules of XerD.

It localises to the cytoplasm. Its function is as follows. Site-specific tyrosine recombinase, which acts by catalyzing the cutting and rejoining of the recombining DNA molecules. The XerC-XerD complex is essential to convert dimers of the bacterial chromosome into monomers to permit their segregation at cell division. It also contributes to the segregational stability of plasmids. This Staphylococcus aureus (strain bovine RF122 / ET3-1) protein is Tyrosine recombinase XerC.